Here is a 475-residue protein sequence, read N- to C-terminus: Glutamyl-tRNA(Gln) amidotransferase subunit A (475 aa).

Catalysis depends on charge relay system residues K69 and S144. The active-site Acyl-ester intermediate is the S168.

This sequence belongs to the amidase family. GatA subfamily. As to quaternary structure, heterotrimer of A, B and C subunits.

It carries out the reaction L-glutamyl-tRNA(Gln) + L-glutamine + ATP + H2O = L-glutaminyl-tRNA(Gln) + L-glutamate + ADP + phosphate + H(+). Its function is as follows. Allows the formation of correctly charged Gln-tRNA(Gln) through the transamidation of misacylated Glu-tRNA(Gln) in organisms which lack glutaminyl-tRNA synthetase. The reaction takes place in the presence of glutamine and ATP through an activated gamma-phospho-Glu-tRNA(Gln). The sequence is that of Glutamyl-tRNA(Gln) amidotransferase subunit A from Methanosarcina barkeri (strain Fusaro / DSM 804).